The primary structure comprises 505 residues: Protein disulfide-isomerase A3 (505 aa).

The N-terminal stretch at 1–24 (MRFSCLALLPGVALLLASALLASA) is a signal peptide. The Thioredoxin 1 domain occupies 25 to 133 (SDVLELTDEN…IVSHLKKQAG (109 aa)). Active-site nucleophile residues include C57 and C60. Cysteines 57 and 60 form a disulfide. K61 is subject to N6-methyllysine. Residues C85 and C92 are joined by a disulfide bond. Position 129 is an N6-succinyllysine (K129). K152 bears the N6-acetyllysine mark. N6-succinyllysine is present on K218. K252 is subject to N6-acetyllysine. T319 carries the phosphothreonine modification. The Thioredoxin 2 domain maps to 343–485 (SRDGKALERF…FISYLQREAT (143 aa)). Residue K362 is modified to N6-acetyllysine. Catalysis depends on nucleophile residues C406 and C409. C406 and C409 are oxidised to a cystine. The interval 484-505 (ATNPPIIQEEKPKKKKKAQEDL) is disordered. Basic and acidic residues predominate over residues 491–505 (QEEKPKKKKKAQEDL). K494 bears the N6-acetyllysine mark. Residues 502 to 505 (QEDL) carry the Prevents secretion from ER motif.

The protein belongs to the protein disulfide isomerase family. As to quaternary structure, part of the major histocompatibility complex class I (MHC I) peptide loading complex composed of TAP1, TAP2, B2M, MHC heavy chain, TAPBP, PDIA3, and CALR. Interacts with ERP27 and CANX. Interacts with SERPINA2 and with SERPINA1. Interacts with ATP2A2. In terms of processing, within the major histocompatibility complex class I (MHC I) peptide loading complex forms reversible disulfide-linked heterodimers with TAPBP as part of its protein folding chaperone activity. This is essential to assist the dynamic assembly of the MHC I complex with high affinity antigens in the endoplasmic reticulum. Post-translationally, phosphorylated. As to expression, in caput epididymal spermatozoa, detected in the head, mid and principal pieces. In cauda epididymal spermatozoa detected only in the acrosome (at protein level).

It is found in the endoplasmic reticulum. Its subcellular location is the endoplasmic reticulum lumen. The protein resides in the melanosome. It catalyses the reaction Catalyzes the rearrangement of -S-S- bonds in proteins.. With respect to regulation, seems to be inhibited by acidic phospholipids. In terms of biological role, protein disulfide isomerase that catalyzes the formation, isomerization, and reduction or oxidation of disulfide bonds in client proteins and functions as a protein folding chaperone. Core component of the major histocompatibility complex class I (MHC I) peptide loading complex where it functions as an essential folding chaperone for TAPBP. Through TAPBP, assists the dynamic assembly of the MHC I complex with high affinity antigens in the endoplasmic reticulum. Therefore, plays a crucial role in the presentation of antigens to cytotoxic T cells in adaptive immunity. In Rattus norvegicus (Rat), this protein is Protein disulfide-isomerase A3 (Pdia3).